The sequence spans 197 residues: RNA chaperone ProQ (197 aa).

The interval 115–138 (RAAAKKAQQKKHPRKPANKNLKKE) is disordered. Residues 117–131 (AAKKAQQKKHPRKPA) show a composition bias toward basic residues.

Belongs to the ProQ family.

It is found in the cytoplasm. RNA chaperone with significant RNA binding, RNA strand exchange and RNA duplexing activities. The chain is RNA chaperone ProQ from Haemophilus influenzae (strain ATCC 51907 / DSM 11121 / KW20 / Rd).